The primary structure comprises 126 residues: Small ribosomal subunit protein uS12 (126 aa).

The disordered stretch occupies residues 1–26 (MPTINQLVRKGRASETTKSKSPALQD). Residue Asp89 is modified to 3-methylthioaspartic acid. The segment at 103–126 (DTQGVKDRKQARSKYGAKRAKAGK) is disordered. Residues 113–126 (ARSKYGAKRAKAGK) show a composition bias toward basic residues.

The protein belongs to the universal ribosomal protein uS12 family. Part of the 30S ribosomal subunit. Contacts proteins S8 and S17. May interact with IF1 in the 30S initiation complex.

Functionally, with S4 and S5 plays an important role in translational accuracy. Its function is as follows. Interacts with and stabilizes bases of the 16S rRNA that are involved in tRNA selection in the A site and with the mRNA backbone. Located at the interface of the 30S and 50S subunits, it traverses the body of the 30S subunit contacting proteins on the other side and probably holding the rRNA structure together. The combined cluster of proteins S8, S12 and S17 appears to hold together the shoulder and platform of the 30S subunit. The protein is Small ribosomal subunit protein uS12 of Paraburkholderia xenovorans (strain LB400).